The following is a 261-amino-acid chain: Tryptophan synthase alpha chain (261 aa).

Active-site proton acceptor residues include Glu47 and Asp58.

Belongs to the TrpA family. As to quaternary structure, tetramer of two alpha and two beta chains.

It catalyses the reaction (1S,2R)-1-C-(indol-3-yl)glycerol 3-phosphate + L-serine = D-glyceraldehyde 3-phosphate + L-tryptophan + H2O. It participates in amino-acid biosynthesis; L-tryptophan biosynthesis; L-tryptophan from chorismate: step 5/5. Functionally, the alpha subunit is responsible for the aldol cleavage of indoleglycerol phosphate to indole and glyceraldehyde 3-phosphate. The chain is Tryptophan synthase alpha chain from Neisseria meningitidis serogroup B (strain ATCC BAA-335 / MC58).